A 131-amino-acid chain; its full sequence is Profilin-A (131 aa).

Belongs to the profilin family. In terms of assembly, occurs in many kinds of cells as a complex with monomeric actin in a 1:1 ratio.

The protein localises to the cytoplasm. It localises to the cytoskeleton. In terms of biological role, binds to actin and affects the structure of the cytoskeleton. At high concentrations, profilin prevents the polymerization of actin, whereas it enhances it at low concentrations. By binding to PIP2, it inhibits the formation of IP3 and DG. May serve as a modulator in pollen germination and pollen tube growth. In Oryza sativa subsp. japonica (Rice), this protein is Profilin-A.